The following is a 432-amino-acid chain: Peptidase B (432 aa).

Lys-196 and Asp-201 together coordinate Mn(2+). Residue Lys-208 is part of the active site. Mn(2+) is bound by residues Asp-219, Asp-278, and Glu-280. The active site involves Arg-282.

This sequence belongs to the peptidase M17 family. Homohexamer. It depends on Mn(2+) as a cofactor.

It localises to the cytoplasm. The catalysed reaction is Release of an N-terminal amino acid, Xaa, from a peptide or arylamide. Xaa is preferably Glu or Asp but may be other amino acids, including Leu, Met, His, Cys and Gln.. Its function is as follows. Probably plays an important role in intracellular peptide degradation. The protein is Peptidase B of Yersinia pestis bv. Antiqua (strain Antiqua).